Reading from the N-terminus, the 421-residue chain is Flap endonuclease 1 (421 aa).

Residues 1–109 are N-domain; it reads MGIKGLAKLL…HELIKRREKR (109 aa). A Mg(2+)-binding site is contributed by Asp34. DNA contacts are provided by Arg47 and Arg75. Mg(2+)-binding residues include Asp91, Glu163, Glu165, Asp184, and Asp186. Residues 127–258 form an I-domain region; sequence EQDKQSKRLV…KTALKLIREH (132 aa). Glu163 lines the DNA pocket. 2 residues coordinate DNA: Gly236 and Asp238. Asp238 contributes to the Mg(2+) binding site. The tract at residues 284 to 307 is disordered; sequence KKLDAQSDDDDEEGVESPSKEENN. The span at 289–298 shows a compositional bias: acidic residues; sequence QSDDDDEEGV. An interaction with PCNA region spans residues 379–387; it reads PQTRMDSFF. The disordered stretch occupies residues 398–421; the sequence is SAAKRKADAAKAKAAVSKKKTKKH.

It belongs to the XPG/RAD2 endonuclease family. FEN1 subfamily. As to quaternary structure, interacts with PCNA. Three molecules of FEN1 bind to one PCNA trimer with each molecule binding to one PCNA monomer. PCNA stimulates the nuclease activity without altering cleavage specificity. Mg(2+) serves as cofactor. Post-translationally, phosphorylated. Phosphorylation upon DNA damage induces relocalization to the nuclear plasma.

The protein resides in the nucleus. Its subcellular location is the nucleolus. It localises to the nucleoplasm. It is found in the mitochondrion. Functionally, structure-specific nuclease with 5'-flap endonuclease and 5'-3' exonuclease activities involved in DNA replication and repair. During DNA replication, cleaves the 5'-overhanging flap structure that is generated by displacement synthesis when DNA polymerase encounters the 5'-end of a downstream Okazaki fragment. It enters the flap from the 5'-end and then tracks to cleave the flap base, leaving a nick for ligation. Also involved in the long patch base excision repair (LP-BER) pathway, by cleaving within the apurinic/apyrimidinic (AP) site-terminated flap. Acts as a genome stabilization factor that prevents flaps from equilibrating into structures that lead to duplications and deletions. Also possesses 5'-3' exonuclease activity on nicked or gapped double-stranded DNA, and exhibits RNase H activity. Also involved in replication and repair of rDNA and in repairing mitochondrial DNA. The protein is Flap endonuclease 1 of Phaeodactylum tricornutum (strain CCAP 1055/1).